The sequence spans 106 residues: Small ribosomal subunit protein bS16 (106 aa).

It belongs to the bacterial ribosomal protein bS16 family.

In Wolbachia sp. subsp. Brugia malayi (strain TRS), this protein is Small ribosomal subunit protein bS16.